The chain runs to 446 residues: MSSSTSTIVAIASAAGTGGVGIVRLSGPQSRQIAVQLGVARLQPRHAHYARFRDAQGAVIDDGIALWFNAPHSFTGEDVVELQGHGSPVLLRQLVARCIELGARQARAGEFSERAFLNGKLDLAQAEAIADVIAAGDLRAARAARRALDGVFSRRVDAVAHTLTRLRIHVEAAIDFADEPLDTLGGNQVRDGLTQARTLLAQLLRDAERGRTLRDGLHAVLIGPPNAGKSSLLNALAGSERAIVTDVAGTTRDTLHEAIQLDGFELTLVDTAGLRDGGDAIEREGMRRARAELERADLALVVLDARDPQAARAAIGDAIDAVPRQLWIHNKCDLLSDAAPLDVNAIAVSAVTGQGLEQLHIRLRELALGDGVESVDGEFSARTRHVEALRRAERHVDAADLELGFEQLELAAEELRLAHEALGEITGKISADDLLGKIFSSFCIGK.

The (6S)-5-formyl-5,6,7,8-tetrahydrofolate site is built by Arg-24, Glu-81, and Lys-120. The TrmE-type G domain occupies 216–368 (GLHAVLIGPP…LHIRLRELAL (153 aa)). Asn-226 is a binding site for K(+). Residues 226 to 231 (NAGKSS), 245 to 251 (TDVAGTT), and 270 to 273 (DTAG) each bind GTP. Ser-230 provides a ligand contact to Mg(2+). Thr-245, Val-247, and Thr-250 together coordinate K(+). Thr-251 contributes to the Mg(2+) binding site. A (6S)-5-formyl-5,6,7,8-tetrahydrofolate-binding site is contributed by Lys-446.

It belongs to the TRAFAC class TrmE-Era-EngA-EngB-Septin-like GTPase superfamily. TrmE GTPase family. Homodimer. Heterotetramer of two MnmE and two MnmG subunits. K(+) serves as cofactor.

Its subcellular location is the cytoplasm. Functionally, exhibits a very high intrinsic GTPase hydrolysis rate. Involved in the addition of a carboxymethylaminomethyl (cmnm) group at the wobble position (U34) of certain tRNAs, forming tRNA-cmnm(5)s(2)U34. The chain is tRNA modification GTPase MnmE from Xanthomonas oryzae pv. oryzae (strain KACC10331 / KXO85).